A 265-amino-acid polypeptide reads, in one-letter code: Insulin-like growth factor-binding protein 5 (265 aa).

The N-terminal stretch at 1-21 (MEMLLPMCLLLVSLCLGQCQA) is a signal peptide. Positions 24–104 (SFVHCEPCDD…LHGRGVCLNL (81 aa)) constitute an IGFBP N-terminal domain. 6 cysteine pairs are disulfide-bonded: cysteine 28–cysteine 54, cysteine 31–cysteine 56, cysteine 39–cysteine 57, cysteine 46–cysteine 60, cysteine 68–cysteine 81, and cysteine 75–cysteine 101. Residues 111–121 (SKIDRESREED) are compositionally biased toward basic and acidic residues. The segment at 111–137 (SKIDRESREEDPTTSETEDIYQSKHRG) is disordered. In terms of domain architecture, Thyroglobulin type-1 spans 182–256 (MGPCRRQVET…IDYVNGDLQC (75 aa)). 3 disulfide bridges follow: cysteine 185-cysteine 212, cysteine 223-cysteine 234, and cysteine 236-cysteine 256.

It is found in the secreted. IGF-binding proteins prolong the half-life of the IGFs and have been shown to either inhibit or stimulate the growth promoting effects of the IGFs on cell culture. They alter the interaction of IGFs with their cell surface receptors. Promotes anterior neural development by stimulating insulin growth factor (IGF) signaling via IGF receptors. This Xenopus laevis (African clawed frog) protein is Insulin-like growth factor-binding protein 5.